The following is a 290-amino-acid chain: UPF0761 membrane protein YihY (290 aa).

Transmembrane regions (helical) follow at residues 44–64, 104–124, 140–160, 183–203, 210–230, and 244–264; these read LLSL…FPMF, VGAC…DSAL, FAVY…SLAI, IFPL…VPTI, AIVG…GFAL, and VLAV…IVLL.

The protein belongs to the UPF0761 family.

It localises to the cell inner membrane. This is UPF0761 membrane protein YihY from Escherichia fergusonii (strain ATCC 35469 / DSM 13698 / CCUG 18766 / IAM 14443 / JCM 21226 / LMG 7866 / NBRC 102419 / NCTC 12128 / CDC 0568-73).